The primary structure comprises 193 residues: Peptide deformylase 2 (193 aa).

Residues cysteine 100 and histidine 142 each contribute to the Fe cation site. Glutamate 143 is a catalytic residue. Histidine 146 serves as a coordination point for Fe cation.

The protein belongs to the polypeptide deformylase family. Fe(2+) is required as a cofactor.

It carries out the reaction N-terminal N-formyl-L-methionyl-[peptide] + H2O = N-terminal L-methionyl-[peptide] + formate. Its function is as follows. Removes the formyl group from the N-terminal Met of newly synthesized proteins. Requires at least a dipeptide for an efficient rate of reaction. N-terminal L-methionine is a prerequisite for activity but the enzyme has broad specificity at other positions. The protein is Peptide deformylase 2 of Corynebacterium efficiens (strain DSM 44549 / YS-314 / AJ 12310 / JCM 11189 / NBRC 100395).